A 183-amino-acid polypeptide reads, in one-letter code: Transposon gamma-delta resolvase (183 aa).

One can recognise a Resolvase/invertase-type recombinase catalytic domain in the interval 2–137; it reads RLFGYARVST…EGRQEAMAKG (136 aa). The O-(5'-phospho-DNA)-serine intermediate role is filled by serine 10. The H-T-H motif DNA-binding region spans 161–180; that stretch reads ASHISKTMNIARSTVYKVIN.

Belongs to the site-specific recombinase resolvase family.

This protein catalyzes the site-specific recombination of the transposon and also regulates its frequency of transposition. This is Transposon gamma-delta resolvase (tnpR) from Escherichia coli (strain K12).